Here is a 163-residue protein sequence, read N- to C-terminus: ATP synthase subunit b (163 aa).

A helical membrane pass occupies residues 13–33 (SFILFVWFCMKYIWPPIIFAI).

This sequence belongs to the ATPase B chain family. In terms of assembly, F-type ATPases have 2 components, F(1) - the catalytic core - and F(0) - the membrane proton channel. F(1) has five subunits: alpha(3), beta(3), gamma(1), delta(1), epsilon(1). F(0) has three main subunits: a(1), b(2) and c(10-14). The alpha and beta chains form an alternating ring which encloses part of the gamma chain. F(1) is attached to F(0) by a central stalk formed by the gamma and epsilon chains, while a peripheral stalk is formed by the delta and b chains.

The protein resides in the cell membrane. F(1)F(0) ATP synthase produces ATP from ADP in the presence of a proton or sodium gradient. F-type ATPases consist of two structural domains, F(1) containing the extramembraneous catalytic core and F(0) containing the membrane proton channel, linked together by a central stalk and a peripheral stalk. During catalysis, ATP synthesis in the catalytic domain of F(1) is coupled via a rotary mechanism of the central stalk subunits to proton translocation. In terms of biological role, component of the F(0) channel, it forms part of the peripheral stalk, linking F(1) to F(0). The sequence is that of ATP synthase subunit b from Buchnera aphidicola subsp. Schizaphis graminum (strain Sg).